A 692-amino-acid chain; its full sequence is UvrABC system protein B (692 aa).

The Helicase ATP-binding domain occupies 32-187 (ENIENGEKAQ…LLNDLVGIQF (156 aa)). 45–52 (GATGTGKT) contacts ATP. The Beta-hairpin motif lies at 98–121 (YYDYYQPEAYVPSSDTYIEKDSSV). In terms of domain architecture, Helicase C-terminal spans 436-631 (QIDDLVGEIH…TIKKEIRDLI (196 aa)). Residues 656-691 (KALVKKLEKEMQQAAAALDFEGAAQLRDMVLELRAM) enclose the UVR domain.

Belongs to the UvrB family. Forms a heterotetramer with UvrA during the search for lesions. Interacts with UvrC in an incision complex.

It localises to the cytoplasm. The UvrABC repair system catalyzes the recognition and processing of DNA lesions. A damage recognition complex composed of 2 UvrA and 2 UvrB subunits scans DNA for abnormalities. Upon binding of the UvrA(2)B(2) complex to a putative damaged site, the DNA wraps around one UvrB monomer. DNA wrap is dependent on ATP binding by UvrB and probably causes local melting of the DNA helix, facilitating insertion of UvrB beta-hairpin between the DNA strands. Then UvrB probes one DNA strand for the presence of a lesion. If a lesion is found the UvrA subunits dissociate and the UvrB-DNA preincision complex is formed. This complex is subsequently bound by UvrC and the second UvrB is released. If no lesion is found, the DNA wraps around the other UvrB subunit that will check the other stand for damage. The chain is UvrABC system protein B from Lactococcus lactis subsp. cremoris (strain MG1363).